Here is a 326-residue protein sequence, read N- to C-terminus: UPF0324 membrane protein PBPRB0970 (326 aa).

10 helical membrane passes run 27–49 (FFII…ILGF), 70–89 (LLAY…QAIA), 94–116 (GFGL…TKAL), 123–145 (GHLI…APAI), 155–177 (ALAT…GHLL), 184–206 (FGTW…GAYG), 216–235 (IKLA…ALLF), 242–261 (IGIP…AHFV), 271–290 (IFVA…GSGI), and 303–325 (LLLG…LLNV).

It belongs to the UPF0324 family.

The protein localises to the cell membrane. The protein is UPF0324 membrane protein PBPRB0970 of Photobacterium profundum (strain SS9).